The sequence spans 328 residues: Chlorate reductase subunit beta (328 aa).

4Fe-4S ferredoxin-type domains lie at 6 to 35, 125 to 156, and 158 to 187; these read VAYV…RDGR, NHSF…KRPE, and GIVV…FNLQ. Positions 15, 18, 21, 25, 134, 137, and 142 each coordinate [4Fe-4S] cluster. The [3Fe-4S] cluster site is built by cysteine 146, cysteine 167, and cysteine 173. Residues cysteine 177, cysteine 194, cysteine 197, cysteine 209, and cysteine 213 each coordinate [4Fe-4S] cluster.

Heterotrimer of alpha, beta and gamma subunits. It depends on [3Fe-4S] cluster as a cofactor. [4Fe-4S] cluster is required as a cofactor.

Its subcellular location is the periplasm. Functionally, electron transfer subunit of the terminal reductase during anaerobic growth on chlorate. The protein is Chlorate reductase subunit beta (clrB) of Ideonella dechloratans.